The primary structure comprises 425 residues: Orexin/Hypocretin receptor type 1 (425 aa).

Residues 1–25 are disordered; it reads MEPSATPGPQMGVPTEGRERSPEPP. Residues 1-46 are Extracellular-facing; sequence MEPSATPGPQMGVPTEGRERSPEPPDYEDEFLRYLWRDYLYPKQYE. The tract at residues 26-41 is required for response to orexin-A; sequence DYEDEFLRYLWRDYLY. The helical transmembrane segment at 47-67 threads the bilayer; that stretch reads WVLIAAYVAVFFVALVGNTLV. The Cytoplasmic segment spans residues 68-82; it reads CLAVWRNHHMRTVTN. The helical transmembrane segment at 83–105 threads the bilayer; the sequence is YFIVNLSLADVLVTAICLPASLL. Over 106–119 the chain is Extracellular; that stretch reads VDITESWLFGHALC. Cysteines 119 and 202 form a disulfide. Residues 120-140 form a helical membrane-spanning segment; sequence KVIPYLQAVSVSVAVLTLSFI. Topologically, residues 141 to 160 are cytoplasmic; it reads ALDRWYAICHPLLFKSTARR. Residues 161–182 form a helical membrane-spanning segment; it reads ARGSILGIWAVSLAVMVPQAAV. Residues 183–213 lie on the Extracellular side of the membrane; it reads MECSSVLPELANRTRLFSVCDERWADDLYPK. N-linked (GlcNAc...) asparagine glycosylation occurs at asparagine 194. A helical transmembrane segment spans residues 214-235; the sequence is IYHSCFFIVTYLAPLGLMAMAY. Residues 236-298 lie on the Cytoplasmic side of the membrane; sequence FQIFRKLWGR…QMRARRKTAK (63 aa). A helical transmembrane segment spans residues 299-321; the sequence is MLMVVLLVFALCYLPISVLNVLK. Residues 322 to 336 lie on the Extracellular side of the membrane; it reads RVFGMFRQASDREAV. A helical membrane pass occupies residues 337–360; it reads YACFTFSHWLVYANSAANPIIYNF. The Cytoplasmic portion of the chain corresponds to 361 to 425; the sequence is LSGKFREQFK…LLTSVTTVLP (65 aa).

Belongs to the G-protein coupled receptor 1 family.

It is found in the cell membrane. Functionally, moderately selective excitatory receptor for orexin-A and, with a lower affinity, for orexin-B neuropeptide. Triggers an increase in cytoplasmic Ca(2+) levels in response to orexin-A binding. In Bos taurus (Bovine), this protein is Orexin/Hypocretin receptor type 1.